The sequence spans 368 residues: Zinc finger protein 24 (368 aa).

K22 is covalently cross-linked (Glycyl lysine isopeptide (Lys-Gly) (interchain with G-Cter in SUMO2)). K27 participates in a covalent cross-link: Glycyl lysine isopeptide (Lys-Gly) (interchain with G-Cter in SUMO1); alternate. A Glycyl lysine isopeptide (Lys-Gly) (interchain with G-Cter in SUMO2); alternate cross-link involves residue K27. Residues 52-134 (RQRFRQFGYQ…TVLEDLESEL (83 aa)) form the SCAN box domain. Residues S132 and S142 each carry the phosphoserine modification. Glycyl lysine isopeptide (Lys-Gly) (interchain with G-Cter in SUMO2) cross-links involve residues K147, K177, and K236. The C2H2-type 1 zinc-finger motif lies at 251–273 (HICDECGKHFSQGSALILHQRIH). Residues 251–301 (HICDECGKHFSQGSALILHQRIHSGEKPYGCVECGKAFSRSSILVQHQRVH) form a necessary and sufficient for nuclear localization region. The residue at position 274 (S274) is a Phosphoserine. Residues K277 and K286 each participate in a glycyl lysine isopeptide (Lys-Gly) (interchain with G-Cter in SUMO2) cross-link. 3 consecutive C2H2-type zinc fingers follow at residues 279-301 (YGCV…QRVH), 307-329 (YKCL…QRIH), and 335-357 (YECV…QRRH). A Phosphoserine modification is found at S292. A Phosphotyrosine modification is found at Y335. Glycyl lysine isopeptide (Lys-Gly) (interchain with G-Cter in SUMO2) cross-links involve residues K361 and K367.

It belongs to the krueppel C2H2-type zinc-finger protein family. Post-translationally, sumoylated. Expressed in many tissues except in heart.

Its subcellular location is the nucleus. In terms of biological role, transcription factor required for myelination of differentiated oligodendrocytes. Required for the conversion of oligodendrocytes from the premyelinating to the myelinating state. In the developing central nervous system (CNS), involved in the maintenance in the progenitor stage by promoting the cell cycle. Specifically binds to the 5'-TCAT-3' DNA sequence. Has transcription repressor activity in vitro. This Homo sapiens (Human) protein is Zinc finger protein 24 (ZNF24).